The primary structure comprises 347 residues: uncharacterized protein (347 aa).

This is an uncharacterized protein from Saccharomyces cerevisiae (strain ATCC 204508 / S288c) (Baker's yeast).